Here is a 270-residue protein sequence, read N- to C-terminus: Formamidopyrimidine-DNA glycosylase (270 aa).

The active-site Schiff-base intermediate with DNA is Pro-2. Glu-3 serves as the catalytic Proton donor. The active-site Proton donor; for beta-elimination activity is the Lys-58. Residues His-91, Arg-110, and Arg-151 each coordinate DNA. The segment at 236 to 270 (LVYGRDGLPCPNCGRALKHATIGQRASVWCSHCQR) adopts an FPG-type zinc-finger fold. Catalysis depends on Arg-260, which acts as the Proton donor; for delta-elimination activity.

The protein belongs to the FPG family. As to quaternary structure, monomer. Requires Zn(2+) as cofactor.

It catalyses the reaction Hydrolysis of DNA containing ring-opened 7-methylguanine residues, releasing 2,6-diamino-4-hydroxy-5-(N-methyl)formamidopyrimidine.. The catalysed reaction is 2'-deoxyribonucleotide-(2'-deoxyribose 5'-phosphate)-2'-deoxyribonucleotide-DNA = a 3'-end 2'-deoxyribonucleotide-(2,3-dehydro-2,3-deoxyribose 5'-phosphate)-DNA + a 5'-end 5'-phospho-2'-deoxyribonucleoside-DNA + H(+). Involved in base excision repair of DNA damaged by oxidation or by mutagenic agents. Acts as a DNA glycosylase that recognizes and removes damaged bases. Has a preference for oxidized purines, such as 7,8-dihydro-8-oxoguanine (8-oxoG). Has AP (apurinic/apyrimidinic) lyase activity and introduces nicks in the DNA strand. Cleaves the DNA backbone by beta-delta elimination to generate a single-strand break at the site of the removed base with both 3'- and 5'-phosphates. This Stenotrophomonas maltophilia (strain R551-3) protein is Formamidopyrimidine-DNA glycosylase.